The sequence spans 970 residues: Sodium/calcium exchanger 1 (970 aa).

A signal peptide spans 1 to 32 (MLQFSLSPTLSMGFHVIAMVALLFSHVDHISA). Topologically, residues 33–71 (ETEMEGEGNETGECTGSYYCKKGVILPIWEPQDPSFGDK) are extracellular. An N-linked (GlcNAc...) asparagine glycan is attached at Asn41. Residues 72–92 (IARATVYFVAMVYMFLGVSII) form a helical membrane-spanning segment. Topologically, residues 93 to 133 (ADRFMSSIEVITSQEKEITIKKPNGETTKTTVRIWNETVSN) are cytoplasmic. The helical transmembrane segment at 134-154 (LTLMALGSSAPEILLSVIEVC) threads the bilayer. One copy of the Alpha-1 repeat lies at 138–178 (ALGSSAPEILLSVIEVCGHNFTAGDLGPSTIVGSAAFNMFI). Residues 155-167 (GHNFTAGDLGPST) lie on the Extracellular side of the membrane. Residue Asn157 is glycosylated (N-linked (GlcNAc...) asparagine). Residues 168–188 (IVGSAAFNMFIIIALCVYVVP) traverse the membrane as a helical segment. Residues 189-201 (DGETRKIKHLRVF) are Cytoplasmic-facing. Residues 202–222 (FVTAAWSIFAYTWLYIILSVS) form a helical membrane-spanning segment. Residues 223–228 (SPGVVE) are Extracellular-facing. The chain crosses the membrane as a helical span at residues 229 to 249 (VWEGLLTFFFFPICVVFAWVA). The Cytoplasmic segment spans residues 250-797 (DRRLLFYKYV…FVPPTEYWNG (548 aa)). The interval 251 to 270 (RRLLFYKYVYKRYRAGKQRG) is putative calmodulin-binding region. A phosphoserine mark is found at Ser282 and Ser389. 2 consecutive Calx-beta domains span residues 393 to 493 (VNTE…VHLS) and 524 to 624 (ATVT…LEIG). Ca(2+) contacts are provided by Glu417, Asp453, Asp478, Asp479, Ile481, Glu483, Glu486, Asp530, Asp531, Asp532, Glu548, Asp584, Asp610, Glu611, Glu612, and Glu715. A helical transmembrane segment spans residues 798-818 (WACFIVSILMIGLLTAFIGDL). Residues 819–821 (ASH) lie on the Extracellular side of the membrane. Residues 822 to 842 (FACTIALKDSVTAVVFVALGT) form a helical membrane-spanning segment. An Alpha-2 repeat occupies 839–875 (ALGTSVPDTFASKVAATQDQYADASIGNVTGSNAVNV). Residues 843–871 (SVPDTFASKVAATQDQYADASIGNVTGSN) are Cytoplasmic-facing. The chain crosses the membrane as a helical span at residues 872 to 892 (AVNVFLGIGVAWSIAAIYHAA). Residues 893–903 (NGEQFKVSPGT) are Extracellular-facing. A helical transmembrane segment spans residues 904–924 (LAFSVTLFTIFAFINVGVLLY). Over 925–941 (RRRPEIGGELGGPRTAK) the chain is Cytoplasmic. Residues 942 to 962 (LLTSCLFVLLWLLYIFFSSLE) traverse the membrane as a helical segment. Residues 963 to 970 (AYCHIKGF) are Extracellular-facing.

It belongs to the Ca(2+):cation antiporter (CaCA) (TC 2.A.19) family. SLC8 subfamily.

The protein localises to the cell membrane. It carries out the reaction Ca(2+)(in) + 3 Na(+)(out) = Ca(2+)(out) + 3 Na(+)(in). With respect to regulation, activated by micromolar levels of Ca(2+). In terms of biological role, mediates the exchange of one Ca(2+) ion against three to four Na(+) ions across the cell membrane, and thereby contributes to the regulation of cytoplasmic Ca(2+) levels and Ca(2+)-dependent cellular processes. Contributes to Ca(2+) transport during excitation-contraction coupling in muscle. In a first phase, voltage-gated channels mediate the rapid increase of cytoplasmic Ca(2+) levels due to release of Ca(2+) stores from the endoplasmic reticulum. SLC8A1 mediates the export of Ca(2+) from the cell during the next phase, so that cytoplasmic Ca(2+) levels rapidly return to baseline. Required for normal embryonic heart development and the onset of heart contractions. The sequence is that of Sodium/calcium exchanger 1 (SLC8A1) from Bos taurus (Bovine).